A 276-amino-acid chain; its full sequence is Release factor glutamine methyltransferase (276 aa).

S-adenosyl-L-methionine-binding positions include Gly116–Gly120, Asp139, Trp167, and Asn182. Residue Asn182 to Tyr185 participates in substrate binding.

Belongs to the protein N5-glutamine methyltransferase family. PrmC subfamily.

It carries out the reaction L-glutaminyl-[peptide chain release factor] + S-adenosyl-L-methionine = N(5)-methyl-L-glutaminyl-[peptide chain release factor] + S-adenosyl-L-homocysteine + H(+). Methylates the class 1 translation termination release factors RF1/PrfA and RF2/PrfB on the glutamine residue of the universally conserved GGQ motif. This Pseudomonas aeruginosa (strain ATCC 15692 / DSM 22644 / CIP 104116 / JCM 14847 / LMG 12228 / 1C / PRS 101 / PAO1) protein is Release factor glutamine methyltransferase.